Reading from the N-terminus, the 372-residue chain is NAD(P)H-quinone oxidoreductase subunit 1 (372 aa).

A run of 9 helical transmembrane segments spans residues 27-47 (TIWL…GVLV), 65-85 (PEYI…KLVF), 97-117 (WLFT…YLIV), 128-148 (LGIG…GLLM), 176-196 (LALA…IDIV), 204-224 (ILGW…IAAL), 249-269 (YAGM…VLSS), 308-328 (GLGL…AILL), and 351-371 (VGLV…FAFG).

Belongs to the complex I subunit 1 family. As to quaternary structure, NDH-1 is composed of at least 11 different subunits.

Its subcellular location is the cellular thylakoid membrane. It catalyses the reaction a plastoquinone + NADH + (n+1) H(+)(in) = a plastoquinol + NAD(+) + n H(+)(out). The catalysed reaction is a plastoquinone + NADPH + (n+1) H(+)(in) = a plastoquinol + NADP(+) + n H(+)(out). NDH-1 shuttles electrons from an unknown electron donor, via FMN and iron-sulfur (Fe-S) centers, to quinones in the respiratory and/or the photosynthetic chain. The immediate electron acceptor for the enzyme in this species is believed to be plastoquinone. Couples the redox reaction to proton translocation, and thus conserves the redox energy in a proton gradient. The protein is NAD(P)H-quinone oxidoreductase subunit 1 of Acaryochloris marina (strain MBIC 11017).